We begin with the raw amino-acid sequence, 325 residues long: Holliday junction branch migration complex subunit RuvB (325 aa).

The tract at residues 1-180 (MKNQLLDAKV…FGIHLKLNFY (180 aa)) is large ATPase domain (RuvB-L). ATP-binding positions include L19, R20, G61, K64, T65, S66, 127-129 (EDF), R170, Y180, and R217. T65 is a binding site for Mg(2+). Residues 181–251 (SCEELTQIVE…ITDYALNQLG (71 aa)) form a small ATPAse domain (RuvB-S) region. Residues 254–325 (KLGLDSSDHK…ITANALKHLH (72 aa)) form a head domain (RuvB-H) region. 3 residues coordinate DNA: R290, R309, and R314.

Belongs to the RuvB family. In terms of assembly, homohexamer. Forms an RuvA(8)-RuvB(12)-Holliday junction (HJ) complex. HJ DNA is sandwiched between 2 RuvA tetramers; dsDNA enters through RuvA and exits via RuvB. An RuvB hexamer assembles on each DNA strand where it exits the tetramer. Each RuvB hexamer is contacted by two RuvA subunits (via domain III) on 2 adjacent RuvB subunits; this complex drives branch migration. In the full resolvosome a probable DNA-RuvA(4)-RuvB(12)-RuvC(2) complex forms which resolves the HJ.

The protein resides in the cytoplasm. It catalyses the reaction ATP + H2O = ADP + phosphate + H(+). Functionally, the RuvA-RuvB-RuvC complex processes Holliday junction (HJ) DNA during genetic recombination and DNA repair, while the RuvA-RuvB complex plays an important role in the rescue of blocked DNA replication forks via replication fork reversal (RFR). RuvA specifically binds to HJ cruciform DNA, conferring on it an open structure. The RuvB hexamer acts as an ATP-dependent pump, pulling dsDNA into and through the RuvAB complex. RuvB forms 2 homohexamers on either side of HJ DNA bound by 1 or 2 RuvA tetramers; 4 subunits per hexamer contact DNA at a time. Coordinated motions by a converter formed by DNA-disengaged RuvB subunits stimulates ATP hydrolysis and nucleotide exchange. Immobilization of the converter enables RuvB to convert the ATP-contained energy into a lever motion, pulling 2 nucleotides of DNA out of the RuvA tetramer per ATP hydrolyzed, thus driving DNA branch migration. The RuvB motors rotate together with the DNA substrate, which together with the progressing nucleotide cycle form the mechanistic basis for DNA recombination by continuous HJ branch migration. Branch migration allows RuvC to scan DNA until it finds its consensus sequence, where it cleaves and resolves cruciform DNA. In Orientia tsutsugamushi (strain Boryong) (Rickettsia tsutsugamushi), this protein is Holliday junction branch migration complex subunit RuvB.